The following is a 295-amino-acid chain: UDP-N-acetylenolpyruvoylglucosamine reductase (295 aa).

In terms of domain architecture, FAD-binding PCMH-type spans 27–194 (GVGGEAEVWF…TRVRLKLRRS (168 aa)). The active site involves R174. The active-site Proton donor is the C221. Residue E287 is part of the active site.

The protein belongs to the MurB family. FAD is required as a cofactor.

The protein localises to the cytoplasm. It carries out the reaction UDP-N-acetyl-alpha-D-muramate + NADP(+) = UDP-N-acetyl-3-O-(1-carboxyvinyl)-alpha-D-glucosamine + NADPH + H(+). It functions in the pathway cell wall biogenesis; peptidoglycan biosynthesis. In terms of biological role, cell wall formation. This is UDP-N-acetylenolpyruvoylglucosamine reductase from Deinococcus geothermalis (strain DSM 11300 / CIP 105573 / AG-3a).